A 232-amino-acid polypeptide reads, in one-letter code: Large ribosomal subunit protein uL1 (232 aa).

The protein belongs to the universal ribosomal protein uL1 family. In terms of assembly, part of the 50S ribosomal subunit.

Binds directly to 23S rRNA. The L1 stalk is quite mobile in the ribosome, and is involved in E site tRNA release. Its function is as follows. Protein L1 is also a translational repressor protein, it controls the translation of the L11 operon by binding to its mRNA. This is Large ribosomal subunit protein uL1 from Dichelobacter nodosus (strain VCS1703A).